Reading from the N-terminus, the 46-residue chain is Viscotoxin-A2 (46 aa).

3 disulfides stabilise this stretch: C3/C40, C4/C32, and C16/C26.

It belongs to the plant thionin (TC 1.C.44) family.

Its subcellular location is the secreted. In terms of biological role, thionins are small plant proteins which are toxic to animal cells. They seem to exert their toxic effect at the level of the cell membrane. Their precise function is not known. In Viscum album (European mistletoe), this protein is Viscotoxin-A2 (THI2.3).